The primary structure comprises 356 residues: Delta(7)-sterol 5(6)-desaturase (356 aa).

The next 3 membrane-spanning stretches (helical) occupy residues 87–107, 134–154, and 171–191; these read LTLY…FAGL, QANI…LAEV, and WYDY…IYWI. The Fatty acid hydroxylase domain occupies 179–303; the sequence is FFIAFTDLCI…FTTLWDRLGG (125 aa). A Histidine box-1 motif is present at residues 192 to 196; sequence HRGLH. A Histidine box-2 motif is present at residues 205–209; it reads HKPHH. Residues 235–255 form a helical membrane-spanning segment; that stretch reads YIFPFLFPLSKIASVAFFVFV. The Histidine box-3 motif lies at 280 to 284; that stretch reads HTMHH.

The protein belongs to the sterol desaturase family. Fe cation is required as a cofactor.

It localises to the endoplasmic reticulum membrane. It catalyses the reaction a Delta(7)-sterol + 2 Fe(II)-[cytochrome b5] + O2 + 2 H(+) = a Delta(5),Delta(7)-sterol + 2 Fe(III)-[cytochrome b5] + 2 H2O. Its pathway is steroid metabolism; ergosterol biosynthesis; ergosterol from zymosterol: step 3/5. In terms of biological role, catalyzes the introduction of a C-5 double bond in the B ring of ergosterol. May contribute to the regulation of ergosterol biosynthesis. The sequence is that of Delta(7)-sterol 5(6)-desaturase (ERG3) from Leptosphaeria maculans (Blackleg fungus).